Reading from the N-terminus, the 194-residue chain is ATP-dependent Clp protease proteolytic subunit 3 (194 aa).

S96 serves as the catalytic Nucleophile. H121 is a catalytic residue.

This sequence belongs to the peptidase S14 family. As to quaternary structure, fourteen ClpP subunits assemble into 2 heptameric rings which stack back to back to give a disk-like structure with a central cavity, resembling the structure of eukaryotic proteasomes.

It localises to the cytoplasm. It carries out the reaction Hydrolysis of proteins to small peptides in the presence of ATP and magnesium. alpha-casein is the usual test substrate. In the absence of ATP, only oligopeptides shorter than five residues are hydrolyzed (such as succinyl-Leu-Tyr-|-NHMec, and Leu-Tyr-Leu-|-Tyr-Trp, in which cleavage of the -Tyr-|-Leu- and -Tyr-|-Trp bonds also occurs).. Functionally, cleaves peptides in various proteins in a process that requires ATP hydrolysis. Has a chymotrypsin-like activity. Plays a major role in the degradation of misfolded proteins. The chain is ATP-dependent Clp protease proteolytic subunit 3 from Rhizobium johnstonii (strain DSM 114642 / LMG 32736 / 3841) (Rhizobium leguminosarum bv. viciae).